The following is a 135-amino-acid chain: uncharacterized protein (135 aa).

The segment at 56 to 135 is disordered; the sequence is VQSHNRGINN…QKGQLKIEKV (80 aa). The span at 64 to 74 shows a compositional bias: basic residues; the sequence is NNRRRDQKRKQ. Residues 77–89 are compositionally biased toward polar residues; it reads SIKQDNDLNVSSE. Basic and acidic residues predominate over residues 108–135; it reads YKETPDLDEPGSREKRVSQKGQLKIEKV.

This is an uncharacterized protein from Schizosaccharomyces pombe (strain 972 / ATCC 24843) (Fission yeast).